Consider the following 1598-residue polypeptide: Pentafunctional AROM polypeptide (1598 aa).

Residues 1–384 (MGVPTKISIL…YEPRASTVSN (384 aa)) form a 3-dehydroquinate synthase region. Residues 44 to 46 (DTN), 81 to 84 (ESSK), 114 to 116 (GGV), and D119 each bind NAD(+). R130 contacts 7-phospho-2-dehydro-3-deoxy-D-arabino-heptonate. 139 to 140 (TT) contributes to the NAD(+) binding site. D146 and K152 together coordinate 7-phospho-2-dehydro-3-deoxy-D-arabino-heptonate. K161 serves as a coordination point for NAD(+). N162 contributes to the 7-phospho-2-dehydro-3-deoxy-D-arabino-heptonate binding site. Residues 179–182 (FLNT) and N190 each bind NAD(+). Position 194 (E194) interacts with Zn(2+). 7-phospho-2-dehydro-3-deoxy-D-arabino-heptonate-binding positions include 194 to 197 (EVIK) and K250. Residue E260 is the Proton acceptor; for 3-dehydroquinate synthase activity of the active site. 7-phospho-2-dehydro-3-deoxy-D-arabino-heptonate-binding positions include 264 to 268 (RNLLN) and H271. Position 271 (H271) interacts with Zn(2+). The active-site Proton acceptor; for 3-dehydroquinate synthase activity is the H275. 7-phospho-2-dehydro-3-deoxy-D-arabino-heptonate-binding residues include H287 and K356. H287 serves as a coordination point for Zn(2+). The tract at residues 397 to 842 (VYPGFPKSLN…WNTLAQTFKV (446 aa)) is EPSP synthase. C824 (for EPSP synthase activity) is an active-site residue. A shikimate kinase region spans residues 867-1059 (AASIFIIGMR…RRKENTFFVS (193 aa)). 874-881 (GMRGAGKT) contacts ATP. The segment at 1060–1280 (LTFPDLTPAS…AAPGQLSARE (221 aa)) is 3-dehydroquinase. H1183 acts as the Proton acceptor; for 3-dehydroquinate dehydratase activity in catalysis. The active-site Schiff-base intermediate with substrate; for 3-dehydroquinate dehydratase activity is the K1211. Positions 1293-1598 (AKKFAVIGKP…GVSSSDDTIS (306 aa)) are shikimate dehydrogenase.

In the N-terminal section; belongs to the sugar phosphate cyclases superfamily. Dehydroquinate synthase family. The protein in the 2nd section; belongs to the EPSP synthase family. This sequence in the 3rd section; belongs to the shikimate kinase family. It in the 4th section; belongs to the type-I 3-dehydroquinase family. In the C-terminal section; belongs to the shikimate dehydrogenase family. In terms of assembly, homodimer. Requires Zn(2+) as cofactor.

It localises to the cytoplasm. The enzyme catalyses 7-phospho-2-dehydro-3-deoxy-D-arabino-heptonate = 3-dehydroquinate + phosphate. It carries out the reaction 3-dehydroquinate = 3-dehydroshikimate + H2O. The catalysed reaction is shikimate + NADP(+) = 3-dehydroshikimate + NADPH + H(+). It catalyses the reaction shikimate + ATP = 3-phosphoshikimate + ADP + H(+). The enzyme catalyses 3-phosphoshikimate + phosphoenolpyruvate = 5-O-(1-carboxyvinyl)-3-phosphoshikimate + phosphate. It functions in the pathway metabolic intermediate biosynthesis; chorismate biosynthesis; chorismate from D-erythrose 4-phosphate and phosphoenolpyruvate: step 2/7. Its pathway is metabolic intermediate biosynthesis; chorismate biosynthesis; chorismate from D-erythrose 4-phosphate and phosphoenolpyruvate: step 3/7. The protein operates within metabolic intermediate biosynthesis; chorismate biosynthesis; chorismate from D-erythrose 4-phosphate and phosphoenolpyruvate: step 4/7. It participates in metabolic intermediate biosynthesis; chorismate biosynthesis; chorismate from D-erythrose 4-phosphate and phosphoenolpyruvate: step 5/7. It functions in the pathway metabolic intermediate biosynthesis; chorismate biosynthesis; chorismate from D-erythrose 4-phosphate and phosphoenolpyruvate: step 6/7. Functionally, the AROM polypeptide catalyzes 5 consecutive enzymatic reactions in prechorismate polyaromatic amino acid biosynthesis. In Paracoccidioides brasiliensis (strain Pb18), this protein is Pentafunctional AROM polypeptide.